We begin with the raw amino-acid sequence, 420 residues long: Tyrosine--tRNA ligase (420 aa).

Tyr38 is an L-tyrosine binding site. The short motif at 43–52 is the 'HIGH' region element; the sequence is PTGDSLHIGH. Tyr169 and Gln173 together coordinate L-tyrosine. The 'KMSKS' region motif lies at 231–235; sequence KFGKS. Lys234 is a binding site for ATP. The S4 RNA-binding domain maps to 353 to 419; sequence KNIVEFLVET…GKRKYTLVKI (67 aa).

It belongs to the class-I aminoacyl-tRNA synthetase family. TyrS type 1 subfamily. In terms of assembly, homodimer.

It localises to the cytoplasm. The catalysed reaction is tRNA(Tyr) + L-tyrosine + ATP = L-tyrosyl-tRNA(Tyr) + AMP + diphosphate + H(+). Functionally, catalyzes the attachment of tyrosine to tRNA(Tyr) in a two-step reaction: tyrosine is first activated by ATP to form Tyr-AMP and then transferred to the acceptor end of tRNA(Tyr). This is Tyrosine--tRNA ligase from Lactobacillus johnsonii (strain CNCM I-12250 / La1 / NCC 533).